The chain runs to 126 residues: UPF0344 protein ABC2900 (126 aa).

Helical transmembrane passes span 16 to 36 (ASHE…YFLF), 43 to 63 (AGTI…VTGA), 66 to 86 (LIAY…VLLI), and 104 to 124 (GMLF…YGII).

This sequence belongs to the UPF0344 family.

It localises to the cell membrane. This Shouchella clausii (strain KSM-K16) (Alkalihalobacillus clausii) protein is UPF0344 protein ABC2900.